We begin with the raw amino-acid sequence, 245 residues long: Eukaryotic translation initiation factor 6 (245 aa).

This sequence belongs to the eIF-6 family. As to quaternary structure, monomer. Associates with the 60S ribosomal subunit.

Its subcellular location is the cytoplasm. It localises to the nucleus. It is found in the nucleolus. Functionally, binds to the 60S ribosomal subunit and prevents its association with the 40S ribosomal subunit to form the 80S initiation complex in the cytoplasm. May also be involved in ribosome biogenesis. The polypeptide is Eukaryotic translation initiation factor 6 (eif6) (Xenopus laevis (African clawed frog)).